A 124-amino-acid polypeptide reads, in one-letter code: Small ribosomal subunit protein bS6 (124 aa).

It belongs to the bacterial ribosomal protein bS6 family.

Binds together with bS18 to 16S ribosomal RNA. This is Small ribosomal subunit protein bS6 from Campylobacter lari (strain RM2100 / D67 / ATCC BAA-1060).